We begin with the raw amino-acid sequence, 341 residues long: Phenylalanine--tRNA ligase alpha subunit (341 aa).

A Mg(2+)-binding site is contributed by E256.

This sequence belongs to the class-II aminoacyl-tRNA synthetase family. Phe-tRNA synthetase alpha subunit type 1 subfamily. Tetramer of two alpha and two beta subunits. Requires Mg(2+) as cofactor.

It is found in the cytoplasm. It catalyses the reaction tRNA(Phe) + L-phenylalanine + ATP = L-phenylalanyl-tRNA(Phe) + AMP + diphosphate + H(+). The polypeptide is Phenylalanine--tRNA ligase alpha subunit (Clostridium perfringens (strain 13 / Type A)).